The primary structure comprises 506 residues: Galactose/methyl galactoside import ATP-binding protein MglA (506 aa).

2 consecutive ABC transporter domains span residues 14 to 249 and 260 to 506; these read LTMT…VGRE and TPKE…AKYL. Position 46–53 (46–53) interacts with ATP; the sequence is GENGAGKS.

Belongs to the ABC transporter superfamily. Galactose/methyl galactoside importer (TC 3.A.1.2.3) family. As to quaternary structure, the complex is composed of one ATP-binding protein (MglA), two transmembrane proteins (MglC) and a solute-binding protein (MglB).

The protein localises to the cell inner membrane. The enzyme catalyses D-galactose(out) + ATP + H2O = D-galactose(in) + ADP + phosphate + H(+). The catalysed reaction is methyl beta-D-galactoside(out) + ATP + H2O = methyl beta-D-galactoside(in) + ADP + phosphate + H(+). Part of the ABC transporter complex MglABC involved in galactose/methyl galactoside import. Responsible for energy coupling to the transport system. The chain is Galactose/methyl galactoside import ATP-binding protein MglA from Pasteurella multocida (strain Pm70).